The primary structure comprises 294 residues: Putative inactive magnesium transporter MRS2-8 (294 aa).

The stretch at 179–216 forms a coiled coil; sequence KLKSSMTRLTAQVQKIKDELEQLLEDDEDMAELYLSRK.

The protein belongs to the CorA metal ion transporter (MIT) (TC 1.A.35.5) family.

This is Putative inactive magnesium transporter MRS2-8 (MRS2-8) from Arabidopsis thaliana (Mouse-ear cress).